The sequence spans 368 residues: tRNA-specific 2-thiouridylase MnmA (368 aa).

ATP is bound by residues 14–21 (AMSGGVDS) and Leu40. Catalysis depends on Cys108, which acts as the Nucleophile. A disulfide bridge connects residues Cys108 and Cys204. Residue Gly132 participates in ATP binding. An interaction with tRNA region spans residues 154-156 (KDQ). The active-site Cysteine persulfide intermediate is Cys204.

This sequence belongs to the MnmA/TRMU family.

It localises to the cytoplasm. The catalysed reaction is S-sulfanyl-L-cysteinyl-[protein] + uridine(34) in tRNA + AH2 + ATP = 2-thiouridine(34) in tRNA + L-cysteinyl-[protein] + A + AMP + diphosphate + H(+). Functionally, catalyzes the 2-thiolation of uridine at the wobble position (U34) of tRNA, leading to the formation of s(2)U34. The protein is tRNA-specific 2-thiouridylase MnmA of Rickettsia canadensis (strain McKiel).